The following is a 353-amino-acid chain: Lysophosphatidic acid receptor 3 (353 aa).

Over 1–31 (MNECHYDKHMDFFYNRSNTDTVDDWTGTKLV) the chain is Extracellular. An N-linked (GlcNAc...) asparagine glycan is attached at Asn15. A helical transmembrane segment spans residues 32 to 52 (IVLCVGTFFCLFIFFSNSLVI). Topologically, residues 53 to 67 (AAVIKNRKFHFPFYY) are cytoplasmic. The chain crosses the membrane as a helical span at residues 68–88 (LLANLAAADFFAGIAYVFLMF). The Extracellular segment spans residues 89-101 (NTGPVSKTLTVNR). Residues 102–124 (WFLRQGLLDSSLTASLTNLLVIA) traverse the membrane as a helical segment. The Cytoplasmic portion of the chain corresponds to 125–146 (VERHMSIMRMRVHSNLTKKRVT). Residues 147–167 (LLILLVWAIAIFMGAVPTLGW) traverse the membrane as a helical segment. Residues 168–186 (NCLCNISACSSLAPIYSRS) lie on the Extracellular side of the membrane. Asn172 carries an N-linked (GlcNAc...) asparagine glycan. A helical membrane pass occupies residues 187–207 (YLVFWTVSNLMAFLIMVVVYL). Residues 208 to 240 (RIYVYVKRKTNVLSPHTSGSISRRRTPMKLMKT) are Cytoplasmic-facing. The helical transmembrane segment at 241–261 (VMTVLGAFVVCWTPGLVVLLL) threads the bilayer. The Extracellular segment spans residues 262-276 (DGLNCRQCGVQHVKR). A helical membrane pass occupies residues 277 to 297 (WFLLLALLNSVVNPIIYSYKD). Over 298–353 (EDMYGTMKKMICCFSQENPERRPSRIPSTVLSRSDTGSQYIEDSISQGAVCNKSTS) the chain is Cytoplasmic. Cys309 carries S-palmitoyl cysteine lipidation.

It belongs to the G-protein coupled receptor 1 family. In terms of tissue distribution, most abundantly expressed in prostate, testes, pancreas, and heart, with moderate levels in lung and ovary. No detectable expression in brain, placenta, liver, skeletal muscle, kidney, spleen, thymus, small intestine, colon, or peripheral blood leukocytes.

It is found in the cell membrane. Functionally, receptor for lysophosphatidic acid (LPA), a mediator of diverse cellular activities. May play a role in the development of ovarian cancer. Seems to be coupled to the G(i)/G(o) and G(q) families of heteromeric G proteins. This Homo sapiens (Human) protein is Lysophosphatidic acid receptor 3 (LPAR3).